We begin with the raw amino-acid sequence, 473 residues long: GTPase Der (473 aa).

2 consecutive EngA-type G domains span residues 3 to 166 (PVIA…ENPE) and 177 to 350 (IRIG…ESAM). GTP is bound by residues 9–16 (GRPNVGKS), 56–60 (DTGGL), 118–121 (NKTD), 183–190 (GRPNVGKS), 230–234 (DTAGV), and 295–298 (NKWD). The region spanning 351–435 (SKWPTNRLTA…PIRFEFKSGE (85 aa)) is the KH-like domain. Residues 444 to 458 (RLTPRQKVKKDNDLK) are compositionally biased toward basic and acidic residues. The interval 444–473 (RLTPRQKVKKDNDLKKGRRIKKTRQKSVKR) is disordered. Residues 459 to 473 (KGRRIKKTRQKSVKR) show a composition bias toward basic residues.

The protein belongs to the TRAFAC class TrmE-Era-EngA-EngB-Septin-like GTPase superfamily. EngA (Der) GTPase family. Associates with the 50S ribosomal subunit.

In terms of biological role, GTPase that plays an essential role in the late steps of ribosome biogenesis. This Marinobacter nauticus (strain ATCC 700491 / DSM 11845 / VT8) (Marinobacter aquaeolei) protein is GTPase Der.